The chain runs to 83 residues: Toxin AahP985 (83 aa).

The N-terminal stretch at 1-18 (MNYLVMISLALLIAGVDS) is a signal peptide. Positions 20-82 (RDAYIAKNDN…VPIKLSGECH (63 aa)) constitute an LCN-type CS-alpha/beta domain. Intrachain disulfides connect cysteine 30/cysteine 81, cysteine 34/cysteine 54, cysteine 40/cysteine 64, and cysteine 44/cysteine 66.

The protein belongs to the long (4 C-C) scorpion toxin superfamily. Sodium channel inhibitor family. Alpha subfamily. In terms of tissue distribution, expressed by the venom gland.

It is found in the secreted. Functionally, binds voltage-independently at site-3 of sodium channels (Nav) and inhibits the inactivation of the activated channels, thereby blocking neuronal transmission. This chain is Toxin AahP985, found in Androctonus australis (Sahara scorpion).